The following is a 244-amino-acid chain: Protein crossbronx (244 aa).

The region spanning 20 to 176 is the UBC core domain; the sequence is QQEYKILAEY…VQENIKESKE (157 aa). The segment at 209 to 244 is disordered; sequence AGRSKQTEPSAQQGNGGHATGLSWVKEGEFKPLSIE.

Belongs to the ubiquitin-conjugating enzyme family. FTS subfamily.

In Drosophila sechellia (Fruit fly), this protein is Protein crossbronx (cbx).